The chain runs to 257 residues: UPF0246 protein Shewana3_3143 (257 aa).

The protein belongs to the UPF0246 family.

This chain is UPF0246 protein Shewana3_3143, found in Shewanella sp. (strain ANA-3).